Consider the following 101-residue polypeptide: DNA-binding protein Fis (101 aa).

Residues 77–96 (QTRAANMLGINRGTLRKKLK) constitute a DNA-binding region (H-T-H motif).

The protein belongs to the transcriptional regulatory Fis family. In terms of assembly, homodimer.

Activates ribosomal RNA transcription. Plays a direct role in upstream activation of rRNA promoters. In Shewanella amazonensis (strain ATCC BAA-1098 / SB2B), this protein is DNA-binding protein Fis.